The following is a 211-amino-acid chain: FMN-dependent NADH:quinone oxidoreductase 2 (211 aa).

17–19 is an FMN binding site; that stretch reads SYS.

It belongs to the azoreductase type 1 family. In terms of assembly, homodimer. FMN serves as cofactor.

It carries out the reaction 2 a quinone + NADH + H(+) = 2 a 1,4-benzosemiquinone + NAD(+). The enzyme catalyses N,N-dimethyl-1,4-phenylenediamine + anthranilate + 2 NAD(+) = 2-(4-dimethylaminophenyl)diazenylbenzoate + 2 NADH + 2 H(+). Functionally, quinone reductase that provides resistance to thiol-specific stress caused by electrophilic quinones. Its function is as follows. Also exhibits azoreductase activity. Catalyzes the reductive cleavage of the azo bond in aromatic azo compounds to the corresponding amines. In Bacillus licheniformis (strain ATCC 14580 / DSM 13 / JCM 2505 / CCUG 7422 / NBRC 12200 / NCIMB 9375 / NCTC 10341 / NRRL NRS-1264 / Gibson 46), this protein is FMN-dependent NADH:quinone oxidoreductase 2.